The following is a 246-amino-acid chain: NAD(P)H-quinone oxidoreductase subunit K (246 aa).

Residues Cys62, Cys63, Cys127, and Cys158 each coordinate [4Fe-4S] cluster.

It belongs to the complex I 20 kDa subunit family. NDH-1 can be composed of about 15 different subunits; different subcomplexes with different compositions have been identified which probably have different functions. The cofactor is [4Fe-4S] cluster.

It localises to the cellular thylakoid membrane. It catalyses the reaction a plastoquinone + NADH + (n+1) H(+)(in) = a plastoquinol + NAD(+) + n H(+)(out). It carries out the reaction a plastoquinone + NADPH + (n+1) H(+)(in) = a plastoquinol + NADP(+) + n H(+)(out). In terms of biological role, NDH-1 shuttles electrons from an unknown electron donor, via FMN and iron-sulfur (Fe-S) centers, to quinones in the respiratory and/or the photosynthetic chain. The immediate electron acceptor for the enzyme in this species is believed to be plastoquinone. Couples the redox reaction to proton translocation, and thus conserves the redox energy in a proton gradient. Cyanobacterial NDH-1 also plays a role in inorganic carbon-concentration. The protein is NAD(P)H-quinone oxidoreductase subunit K of Parasynechococcus marenigrum (strain WH8102).